The chain runs to 351 residues: Probable glucuronosyltransferase Os10g0205300 (351 aa).

At methionine 1 to proline 11 the chain is on the cytoplasmic side. Residues isoleucine 12–phenylalanine 32 traverse the membrane as a helical; Signal-anchor for type II membrane protein segment. At alanine 33–leucine 351 the chain is on the lumenal side. The interval serine 138–asparagine 169 is disordered. Residues glutamine 156 to asparagine 169 are compositionally biased toward basic and acidic residues. N-linked (GlcNAc...) asparagine glycosylation occurs at asparagine 259.

Belongs to the glycosyltransferase 43 family.

It is found in the golgi apparatus membrane. Involved in the synthesis of glucuronoxylan hemicellulose in secondary cell walls. In Oryza sativa subsp. japonica (Rice), this protein is Probable glucuronosyltransferase Os10g0205300.